The sequence spans 105 residues: V-type ATP synthase subunit F (105 aa).

The protein belongs to the V-ATPase F subunit family.

In terms of biological role, produces ATP from ADP in the presence of a proton gradient across the membrane. This Clostridium perfringens (strain 13 / Type A) protein is V-type ATP synthase subunit F.